Consider the following 163-residue polypeptide: Interleukin-17F (163 aa).

Residues 1 to 30 form the signal peptide; the sequence is MTVKSLHVTAMVKYLLLLILGLAFLRETAA. An N-linked (GlcNAc...) asparagine glycan is attached at N83. 2 cysteine pairs are disulfide-bonded: C102/C152 and C107/C154.

It belongs to the IL-17 family. In terms of assembly, homodimer; disulfide-linked. Heterodimer with IL17A (IL17A-IL17F). Forms complexes with IL17RA and IL17RC receptors with 2:1 binding stoichiometry: two receptor chains for one interleukin molecule. IL17F homodimer forms predominantly complexes with IL17RC homodimer, whereas IL17A-IL17F favors complexes with IL17RA-IL17RC. IL17RA and IL17RC chains cannot distinguish between IL17A and IL17F molecules, potentially enabling the formation of topologically distinct complexes.

It localises to the secreted. In terms of biological role, effector cytokine of innate and adaptive immune system involved in antimicrobial host defense and maintenance of tissue integrity. IL17A-IL17F signals via IL17RA-IL17RC heterodimeric receptor complex, triggering homotypic interaction of IL17RA and IL17RC chains with TRAF3IP2 adapter through SEFIR domains. This leads to downstream TRAF6-mediated activation of NF-kappa-B and MAPkinase pathways ultimately resulting in transcriptional activation of cytokines, chemokines, antimicrobial peptides and matrix metalloproteinases, with potential strong immune inflammation. IL17A-IL17F is primarily involved in host defense against extracellular bacteria and fungi by inducing neutrophilic inflammation. As signature effector cytokine of T-helper 17 cells (Th17), primarily induces neutrophil activation and recruitment at infection and inflammatory sites. Stimulates the production of antimicrobial beta-defensins DEFB1, DEFB103A, and DEFB104A by mucosal epithelial cells, limiting the entry of microbes through the epithelial barriers. IL17F homodimer can signal via IL17RC homodimeric receptor complex, triggering downstream activation of TRAF6 and NF-kappa-B signaling pathway. Via IL17RC induces transcriptional activation of IL33, a potent cytokine that stimulates group 2 innate lymphoid cells and adaptive T-helper 2 cells involved in pulmonary allergic response to fungi. Likely via IL17RC, promotes sympathetic innervation of peripheral organs by coordinating the communication between gamma-delta T cells and parenchymal cells. Stimulates sympathetic innervation of thermogenic adipose tissue by driving TGFB1 expression. Regulates the composition of intestinal microbiota and immune tolerance by inducing antimicrobial proteins that specifically control the growth of commensal Firmicutes and Bacteroidetes. This chain is Interleukin-17F (IL17F), found in Callithrix jacchus (White-tufted-ear marmoset).